The following is a 1173-amino-acid chain: Calcium-transporting ATPase 2 (1173 aa).

The disordered stretch occupies residues 1–24; that stretch reads MSRQDENSALLANNENNKPSYTGN. Residues 1 to 114 lie on the Cytoplasmic side of the membrane; that stretch reads MSRQDENSAL…LQLVWAAFND (114 aa). Positions 7–17 are enriched in low complexity; it reads NSALLANNENN. The chain crosses the membrane as a helical span at residues 115–139; the sequence is KTMQLLTVAAVVSFVLGLYELWMQP. Over 140 to 152 the chain is Vacuolar; it reads PQYDPEGNKIKQV. A helical membrane pass occupies residues 153–173; that stretch reads DWIEGVAIMIAVFVVVLVSAA. Residues 174–349 are Cytoplasmic-facing; that stretch reads NDYQKELQFA…LADNISVYGC (176 aa). Residues 350-368 traverse the membrane as a helical segment; the sequence is VSAIILFLVLFTRYLFYII. The Vacuolar portion of the chain corresponds to 369–388; that stretch reads PEDGRFHDLDPAQKGSKFMN. Residues 389-409 form a helical membrane-spanning segment; it reads IFITSITVIVVAVPEGLPLAV. Ca(2+) contacts are provided by Val-398 and Glu-403. The Cytoplasmic segment spans residues 410-899; the sequence is TLALAFATTR…RCVSVSIKKF (490 aa). The 4-aspartylphosphate intermediate role is filled by Asp-445. Mg(2+) contacts are provided by Asp-445 and Thr-447. ATP-binding positions include Thr-447, Lys-643, 762–764, Arg-816, and Lys-822; that span reads TGD. Asp-841 provides a ligand contact to Mg(2+). Asn-844 is a binding site for ATP. Residues 900–922 traverse the membrane as a helical segment; that stretch reads IQFQLIVNITAVILTFVSSVASS. A Ca(2+)-binding site is contributed by Asn-907. Topologically, residues 923–929 are vacuolar; the sequence is DETSVLT. The helical transmembrane segment at 930 to 950 threads the bilayer; it reads AVQLLWINLIMDTLAALALAT. Positions 937 and 941 each coordinate Ca(2+). At 951–976 the chain is on the cytoplasmic side; that stretch reads DKPDPNIMDRKPRGRSTSLISVSTWK. The chain crosses the membrane as a helical span at residues 977 to 998; that stretch reads MILSQATLQLIVTFILHFYGPE. At 999-1010 the chain is on the vacuolar side; sequence LFFKKHEDEITS. Residues 1011-1029 form a helical membrane-spanning segment; sequence HQQQQLNAMTFNTFVWLQF. The Cytoplasmic portion of the chain corresponds to 1030-1065; it reads FTMLVSRKLDEGDGISNWRGRISAANLNFFQDLGRN. The helical transmembrane segment at 1066–1086 threads the bilayer; sequence YYFLTIMAIIGSCQVLIMFFG. Residues 1087–1099 are Vacuolar-facing; that stretch reads GAPFSIARQTKSM. A helical membrane pass occupies residues 1100–1120; the sequence is WITAVLCGMLSLIMGVLVRIC. The Cytoplasmic portion of the chain corresponds to 1121 to 1173; the sequence is PDEVAVKVFPAAFVQRFKYVFGLEFLRKNHTGKHDDEEALLEESDSPESTAFY.

This sequence belongs to the cation transport ATPase (P-type) (TC 3.A.3) family.

It localises to the vacuole membrane. The enzyme catalyses Ca(2+)(in) + ATP + H2O = Ca(2+)(out) + ADP + phosphate + H(+). Its function is as follows. This magnesium-dependent enzyme catalyzes the hydrolysis of ATP coupled with the transport of calcium. Transports the calcium to the vacuole and participates in the control of the cytosolic free calcium. The chain is Calcium-transporting ATPase 2 (PMC1) from Saccharomyces cerevisiae (strain ATCC 204508 / S288c) (Baker's yeast).